Consider the following 137-residue polypeptide: Large ribosomal subunit protein uL16 (137 aa).

Over residues 1 to 17 (MLSPKRTKFRKQQRGRM) the composition is skewed to basic residues. Residues 1-24 (MLSPKRTKFRKQQRGRMRGNANSG) form a disordered region.

This sequence belongs to the universal ribosomal protein uL16 family. As to quaternary structure, part of the 50S ribosomal subunit.

In terms of biological role, binds 23S rRNA and is also seen to make contacts with the A and possibly P site tRNAs. The sequence is that of Large ribosomal subunit protein uL16 from Trichodesmium erythraeum (strain IMS101).